The primary structure comprises 555 residues: MKRKWEATLKQIEERASHYERKPLSSVYRPRLSKPEEPPSIWKLFHRQTQAFNFVKSCKQEVHVFALECKVGDGQRIYLVTTYTQLWFYYKSRRNLLHCYEVIPENAVCKLYFDLEFNKLANPGADGKKMVALLIEHVCKALQEFYTVNCSAEDVLNLDSSTEEKFSRHLIFQLHDVAFKDNIHVGNFVRKILQPAFHLIASEDEDMTPETTGHEFTHFSETPSEQGTCFSKMSTDIDVGESQTSNSEKLGRLGSAQQSSPDLSFLIVKNDMGEKRLFVDLGVYTRNRNFRLYKSSKIGKYVALEVAEDNKFFPIQSKNISKENQYFLSSLVSNVRFSDALRILTCDVPQSKQRVQCFSRTGTSVEAIEGFQCSPYPEIDQFVLSLVNKNGIKGGIRRWNYFFPEELLVYDICKYRWCENIGRAHRSNNIMILVDLKNEVWYQKCHDPVCKAENFKSDCFPLPAEVCLLSLLKEGEEFTTDTTADTETKSPHGPSSSVLSKGAFSDADWDNGIDDTYILEATEDAELAEAAENSLLAYNRMDEIPDELLIEVLQE.

The stretch at 1 to 22 forms a coiled coil; sequence MKRKWEATLKQIEERASHYERK. Residues R76, 114 to 116, and 165 to 169 each bind substrate; these read DLE and KFSRH. Residues D114 and E116 each contribute to the Mn(2+) site. The tract at residues 210–230 is disordered; sequence ETTGHEFTHFSETPSEQGTCF. Over residues 219-230 the composition is skewed to polar residues; sequence FSETPSEQGTCF. At S255 the chain carries Phosphoserine. Substrate-binding positions include 288–291 and K297; that span reads RNFR. Zn(2+) contacts are provided by C418, H425, C445, and C450. The Zinc knuckle motif signature appears at 418-451; the sequence is CENIGRAHRSNNIMILVDLKNEVWYQKCHDPVCK. The interval 480–503 is disordered; it reads TDTTADTETKSPHGPSSSVLSKGA. Positions 480 to 555 are interaction with RPA1; sequence TDTTADTETK…DELLIEVLQE (76 aa). Short sequence motifs (RPA1-binding motif) lie at residues 509-523 and 543-551; these read WDNG…EATE and EIPDELLIE.

It belongs to the eukaryotic-type primase small subunit family. In terms of assembly, interacts with RPA1; leading to recruitment to chromatin and stimulate DNA primase activity. Interacts with SSBP1. Interacts with POLDIP2; leading to enhance DNA polymerase activity. Mn(2+) is required as a cofactor.

It localises to the nucleus. Its subcellular location is the mitochondrion matrix. The protein resides in the chromosome. It carries out the reaction ssDNA + n NTP = ssDNA/pppN(pN)n-1 hybrid + (n-1) diphosphate.. The enzyme catalyses DNA(n) + a 2'-deoxyribonucleoside 5'-triphosphate = DNA(n+1) + diphosphate. DNA primase and DNA polymerase required to tolerate replication-stalling lesions by bypassing them. Required to facilitate mitochondrial and nuclear replication fork progression by initiating de novo DNA synthesis using dNTPs and acting as an error-prone DNA polymerase able to bypass certain DNA lesions. Shows a high capacity to tolerate DNA damage lesions such as 8oxoG and abasic sites in DNA. Provides different translesion synthesis alternatives when DNA replication is stalled: able to synthesize DNA primers downstream of lesions, such as ultraviolet (UV) lesions, R-loops and G-quadruplexes, to allow DNA replication to continue. Can also realign primers ahead of 'unreadable lesions' such as abasic sites and 6-4 photoproduct (6-4 pyrimidine-pyrimidinone), thereby skipping the lesion. Repriming avoids fork degradation while leading to accumulation of internal ssDNA gaps behind the forks. Also able to incorporate nucleotides opposite DNA lesions such as 8oxoG, like a regular translesion synthesis DNA polymerase. Also required for reinitiating stalled forks after UV damage during nuclear DNA replication. Required for mitochondrial DNA (mtDNA) synthesis and replication, by reinitiating synthesis after UV damage or in the presence of chain-terminating nucleotides. Prevents APOBEC family-mediated DNA mutagenesis by repriming downstream of abasic site to prohibit error-prone translesion synthesis. Has non-overlapping function with POLH. In addition to its role in DNA damage response, also required to maintain efficient nuclear and mitochondrial DNA replication in unperturbed cells. The chain is DNA-directed primase/polymerase protein from Bos taurus (Bovine).